Reading from the N-terminus, the 153-residue chain is Transthyretin (153 aa).

The signal sequence occupies residues 1-24 (MAYYNTLALLTIFIFSGAFHRAQG). Cys-33 carries the sulfocysteine modification. The L-thyroxine site is built by Lys-38, Glu-77, and Ser-140.

Belongs to the transthyretin family. As to quaternary structure, homotetramer. Dimer of dimers. In the homotetramer, subunits assemble around a central channel that can accommodate two ligand molecules. Interacts with RBP4. Post-translationally, sulfonation of the reactive cysteine Cys-33 enhances the stability of the native conformation of TTR, avoiding misassembly of the protein leading to amyloid formation. Detected in plasma (at protein level). Expressed during metamorphosis in tadpole liver but not in tadpole brain, nor adult liver.

The protein localises to the secreted. Its function is as follows. Thyroid hormone-binding protein, with a much higher binding affinity for triiodothyronine (T3) than for thyroxine (T4). Probably transports triiodothyronine from the bloodstream to the brain. The polypeptide is Transthyretin (Aquarana catesbeiana (American bullfrog)).